The chain runs to 154 residues: Myoglobin (154 aa).

The region spanning 2-148 (GLSDGEWQLV…FRKDIAAKYK (147 aa)) is the Globin domain. Residue Ser-4 is modified to Phosphoserine. His-65 is a binding site for nitrite. His-65 is an O2 binding site. Thr-68 is modified (phosphothreonine). His-94 is a heme b binding site.

It belongs to the globin family. Monomeric.

The protein localises to the cytoplasm. It is found in the sarcoplasm. The catalysed reaction is Fe(III)-heme b-[protein] + nitric oxide + H2O = Fe(II)-heme b-[protein] + nitrite + 2 H(+). It carries out the reaction H2O2 + AH2 = A + 2 H2O. Functionally, monomeric heme protein which primary function is to store oxygen and facilitate its diffusion within muscle tissues. Reversibly binds oxygen through a pentacoordinated heme iron and enables its timely and efficient release as needed during periods of heightened demand. Depending on the oxidative conditions of tissues and cells, and in addition to its ability to bind oxygen, it also has a nitrite reductase activity whereby it regulates the production of bioactive nitric oxide. Under stress conditions, like hypoxia and anoxia, it also protects cells against reactive oxygen species thanks to its pseudoperoxidase activity. This is Myoglobin (MB) from Orcinus orca (Killer whale).